The sequence spans 186 residues: Probable peptidoglycan L,D-endopeptidase MepK (186 aa).

The N-terminal stretch at 1-30 (MNYVDQNKRKWLSLGGIALGISILPNSVLA) is a signal peptide. Positions 134, 141, and 174 each coordinate Zn(2+).

This sequence belongs to the peptidase M15 family. It depends on Zn(2+) as a cofactor.

Its pathway is cell wall biogenesis; cell wall polysaccharide biosynthesis. Its function is as follows. L,D-endopeptidase that cleaves meso-diaminopimelic acid (mDAP)-mDAP cross-links in peptidoglycan. It works in conjunction with other elongation-specific D,D-endopeptidases to make space for efficient incorporation of nascent peptidoglycan strands into the sacculus and thus enable cell wall expansion. The chain is Probable peptidoglycan L,D-endopeptidase MepK from Haemophilus influenzae (strain ATCC 51907 / DSM 11121 / KW20 / Rd).